We begin with the raw amino-acid sequence, 459 residues long: Cysteine--tRNA ligase (459 aa).

Cys28 lines the Zn(2+) pocket. The short motif at Ile30–His40 is the 'HIGH' region element. Zn(2+) is bound by residues Cys209, His234, and Glu238. A 'KMSKS' region motif is present at residues Lys266–Ser270. Lys269 is an ATP binding site.

Belongs to the class-I aminoacyl-tRNA synthetase family. Monomer. Zn(2+) serves as cofactor.

It is found in the cytoplasm. The enzyme catalyses tRNA(Cys) + L-cysteine + ATP = L-cysteinyl-tRNA(Cys) + AMP + diphosphate. The protein is Cysteine--tRNA ligase of Pseudoalteromonas translucida (strain TAC 125).